Reading from the N-terminus, the 232-residue chain is 2,3,4,5-tetrahydropyridine-2,6-dicarboxylate N-acetyltransferase (232 aa).

It belongs to the transferase hexapeptide repeat family. DapH subfamily.

It carries out the reaction (S)-2,3,4,5-tetrahydrodipicolinate + acetyl-CoA + H2O = L-2-acetamido-6-oxoheptanedioate + CoA. It participates in amino-acid biosynthesis; L-lysine biosynthesis via DAP pathway; LL-2,6-diaminopimelate from (S)-tetrahydrodipicolinate (acetylase route): step 1/3. Its function is as follows. Catalyzes the transfer of an acetyl group from acetyl-CoA to tetrahydrodipicolinate. In Streptococcus pneumoniae (strain Taiwan19F-14), this protein is 2,3,4,5-tetrahydropyridine-2,6-dicarboxylate N-acetyltransferase.